The following is a 340-amino-acid chain: tRNA N6-adenosine threonylcarbamoyltransferase (340 aa).

Fe cation contacts are provided by histidine 109 and histidine 113. Substrate-binding positions include 132–136 (AISGA), aspartate 165, glycine 178, and asparagine 277. A Fe cation-binding site is contributed by aspartate 302.

This sequence belongs to the KAE1 / TsaD family. The cofactor is Fe(2+).

It is found in the cytoplasm. The enzyme catalyses L-threonylcarbamoyladenylate + adenosine(37) in tRNA = N(6)-L-threonylcarbamoyladenosine(37) in tRNA + AMP + H(+). Required for the formation of a threonylcarbamoyl group on adenosine at position 37 (t(6)A37) in tRNAs that read codons beginning with adenine. Is involved in the transfer of the threonylcarbamoyl moiety of threonylcarbamoyl-AMP (TC-AMP) to the N6 group of A37, together with TsaE and TsaB. TsaD likely plays a direct catalytic role in this reaction. This Chlamydia muridarum (strain MoPn / Nigg) protein is tRNA N6-adenosine threonylcarbamoyltransferase.